The chain runs to 789 residues: Glycerol-3-phosphate acyltransferase (789 aa).

Positions 276-281 (HRSYID) match the HXXXXD motif motif.

It belongs to the GPAT/DAPAT family.

The protein localises to the cell membrane. It catalyses the reaction sn-glycerol 3-phosphate + an acyl-CoA = a 1-acyl-sn-glycero-3-phosphate + CoA. It functions in the pathway phospholipid metabolism; CDP-diacylglycerol biosynthesis; CDP-diacylglycerol from sn-glycerol 3-phosphate: step 1/3. This chain is Glycerol-3-phosphate acyltransferase, found in Mycobacterium bovis (strain ATCC BAA-935 / AF2122/97).